The primary structure comprises 579 residues: Trehalase (579 aa).

An N-terminal signal peptide occupies residues 1-15 (MRLFLLLVGLTTVIA). 2 N-linked (GlcNAc...) asparagine glycosylation sites follow: N29 and N58. Residues R161, 168-169 (WD), N205, 214-216 (RSQ), 279-281 (RPE), and G313 contribute to the substrate site. N205 is a glycosylation site (N-linked (GlcNAc...) asparagine). The active-site Proton donor/acceptor is the D315. N331 is a glycosylation site (N-linked (GlcNAc...) asparagine). Catalysis depends on E513, which acts as the Proton donor/acceptor. Residue E528 participates in substrate binding. The span at 560–569 (DASANNGQSN) shows a compositional bias: polar residues. Positions 560-579 (DASANNGQSNEESETDSKEK) are disordered.

The protein belongs to the glycosyl hydrolase 37 family. As to expression, in midgut and Malpighian tubules.

Its subcellular location is the basolateral cell membrane. It carries out the reaction alpha,alpha-trehalose + H2O = alpha-D-glucose + beta-D-glucose. Functionally, involved in uptake of hemolymph trehalose into epithelial cells in the midgut of feeding larvae. This Bombyx mori (Silk moth) protein is Trehalase.